Consider the following 212-residue polypeptide: Large ribosomal subunit protein uL3 (212 aa).

The segment at 135–156 (MTHGNSRSHRVPGSIGQNQSPG) is disordered. Gln153 is modified (N5-methylglutamine).

This sequence belongs to the universal ribosomal protein uL3 family. In terms of assembly, part of the 50S ribosomal subunit. Forms a cluster with proteins L14 and L19. In terms of processing, methylated by PrmB.

Functionally, one of the primary rRNA binding proteins, it binds directly near the 3'-end of the 23S rRNA, where it nucleates assembly of the 50S subunit. This chain is Large ribosomal subunit protein uL3, found in Tolumonas auensis (strain DSM 9187 / NBRC 110442 / TA 4).